The following is a 548-amino-acid chain: C2H2-type transcription factor MSN2 (548 aa).

2 consecutive C2H2-type zinc fingers follow at residues 420 to 448 and 449 to 471; these read FKCE…QDKP and FECN…ARTH.

In terms of assembly, interacts with HOG1/OSM1.

The protein localises to the nucleus. Its subcellular location is the cytoplasm. In terms of biological role, transcription factor that acts as a key downstream transcription factor in the HOG1-MAPK pathway. Regulates the expression of a series of downstream genes and controls vegetative growth, conidiogenesis, cell wall integrity, stress response, mitochondrial morphology, and pathogenicity. Binds to a putative promoter region 1500 bp upstream of the start codons of the target genes MGG_07019, POX1 and DCI1. Binds to the AGGGG and CCCCT motif of the COS1 promoter region. Involved in fatty acid beta-oxidation by directly regulating the expression of the dienoyl-CoA isomerase DCI1, thereby facilitating invasive hyphal growth during the early infection stage. Targets also the 3-methylglutaconyl-CoA hydratase-encoding gene (AUH1) to control mitochondrial morphology and mitophagy, which are critical for the infectious growth of the pathogen. In Pyricularia oryzae (strain 70-15 / ATCC MYA-4617 / FGSC 8958) (Rice blast fungus), this protein is C2H2-type transcription factor MSN2.